A 746-amino-acid chain; its full sequence is Double-stranded RNA-specific editase B2 (746 aa).

2 disordered regions span residues 1–36 (MASV…KDKV) and 50–105 (SPGT…PLEE). Positions 20 to 34 (CKSKRRRRRRSKRKD) are enriched in basic residues. The interval 23–35 (KRRRRRRSKRKDK) is R-domain (ssRNA-binding). 2 DRBM domains span residues 126–192 (TPKN…SFVQ) and 284–348 (NPVV…ALFD). The 328-residue stretch at 415–742 (VLSSGTKCIS…VRKPPEQDQF (328 aa)) folds into the A to I editase domain. Histidine 439 lines the Zn(2+) pocket. The active-site Proton donor is the glutamate 441. Zn(2+) contacts are provided by cysteine 497 and cysteine 562.

As to expression, brain specific.

Its subcellular location is the nucleus. In terms of biological role, lacks editing activity. It prevents the binding of other ADAR enzymes to targets in vitro, and decreases the efficiency of these enzymes. Capable of binding to dsRNA but also to ssRNA. The protein is Double-stranded RNA-specific editase B2 (Adarb2) of Rattus norvegicus (Rat).